Here is a 180-residue protein sequence, read N- to C-terminus: Ribosome maturation factor RimM (180 aa).

One can recognise a PRC barrel domain in the interval 99 to 172; that stretch reads EDEFYQVDLI…FLVVDPVAAG (74 aa).

This sequence belongs to the RimM family. In terms of assembly, binds ribosomal protein uS19.

It is found in the cytoplasm. Functionally, an accessory protein needed during the final step in the assembly of 30S ribosomal subunit, possibly for assembly of the head region. Essential for efficient processing of 16S rRNA. May be needed both before and after RbfA during the maturation of 16S rRNA. It has affinity for free ribosomal 30S subunits but not for 70S ribosomes. This is Ribosome maturation factor RimM from Bartonella henselae (strain ATCC 49882 / DSM 28221 / CCUG 30454 / Houston 1) (Rochalimaea henselae).